Here is a 156-residue protein sequence, read N- to C-terminus: 6,7-dimethyl-8-ribityllumazine synthase (156 aa).

Residues Phe-23, 57 to 59 (AFE), and 81 to 83 (AVI) contribute to the 5-amino-6-(D-ribitylamino)uracil site. A (2S)-2-hydroxy-3-oxobutyl phosphate-binding site is contributed by 86-87 (ST). The active-site Proton donor is the His-89. Phe-114 is a 5-amino-6-(D-ribitylamino)uracil binding site. Arg-128 is a binding site for (2S)-2-hydroxy-3-oxobutyl phosphate.

It belongs to the DMRL synthase family.

The enzyme catalyses (2S)-2-hydroxy-3-oxobutyl phosphate + 5-amino-6-(D-ribitylamino)uracil = 6,7-dimethyl-8-(1-D-ribityl)lumazine + phosphate + 2 H2O + H(+). It participates in cofactor biosynthesis; riboflavin biosynthesis; riboflavin from 2-hydroxy-3-oxobutyl phosphate and 5-amino-6-(D-ribitylamino)uracil: step 1/2. Functionally, catalyzes the formation of 6,7-dimethyl-8-ribityllumazine by condensation of 5-amino-6-(D-ribitylamino)uracil with 3,4-dihydroxy-2-butanone 4-phosphate. This is the penultimate step in the biosynthesis of riboflavin. The sequence is that of 6,7-dimethyl-8-ribityllumazine synthase from Brachyspira hyodysenteriae (strain ATCC 49526 / WA1).